Here is a 798-residue protein sequence, read N- to C-terminus: uncharacterized protein (798 aa).

The span at 1–13 (MSSSQSPSTPSAS) shows a compositional bias: low complexity. The N-terminal 58 residues, 1–58 (MSSSQSPSTPSASLVDSSDSKHPDDLPQIYKRRSVWTSSEDAVSSSNSPEQTTPFTVR), are a transit peptide targeting the chloroplast. Disordered regions lie at residues 1–99 (MSSS…WQDA), 135–158 (AEKK…SMCT), and 417–473 (TGLI…AEPS). Positions 35–55 (VWTSSEDAVSSSNSPEQTTPF) are enriched in polar residues. Positions 57-79 (VREDTNADIARELDLPDDPEPHL) are enriched in basic and acidic residues. The segment covering 137-146 (KKKRKKKKKA) has biased composition (basic residues). The span at 462–473 (AAPAEAQGAEPS) shows a compositional bias: low complexity. Residues 578–658 (RSNMEVAGKL…MLSEARGLRD (81 aa)) adopt a coiled-coil conformation. The segment at 749–798 (DDLKAPAPEPAPLSPGGHRSVESLADEAGITDQAGSLLPAKDNRPSEDLD) is disordered. Position 762 is a phosphoserine (S762). The span at 789–798 (KDNRPSEDLD) shows a compositional bias: basic and acidic residues.

It localises to the plastid. The protein localises to the chloroplast. This is an uncharacterized protein from Arabidopsis thaliana (Mouse-ear cress).